A 224-amino-acid polypeptide reads, in one-letter code: Prophage repressor CohE (224 aa).

In Escherichia coli (strain K12), this protein is Prophage repressor CohE (cohE).